The primary structure comprises 289 residues: Acetyl-coenzyme A carboxylase carboxyl transferase subunit beta (289 aa).

Positions 28-289 (VMTKCPECKK…QGGGMAVWQS (262 aa)) constitute a CoA carboxyltransferase N-terminal domain. 4 residues coordinate Zn(2+): C32, C35, C51, and C54. Residues 32 to 54 (CPECKKIMYTKELLKNLKVCVNC) form a C4-type zinc finger.

It belongs to the AccD/PCCB family. In terms of assembly, acetyl-CoA carboxylase is a heterohexamer composed of biotin carboxyl carrier protein (AccB), biotin carboxylase (AccC) and two subunits each of ACCase subunit alpha (AccA) and ACCase subunit beta (AccD). Requires Zn(2+) as cofactor.

The protein resides in the cytoplasm. The enzyme catalyses N(6)-carboxybiotinyl-L-lysyl-[protein] + acetyl-CoA = N(6)-biotinyl-L-lysyl-[protein] + malonyl-CoA. It functions in the pathway lipid metabolism; malonyl-CoA biosynthesis; malonyl-CoA from acetyl-CoA: step 1/1. Its function is as follows. Component of the acetyl coenzyme A carboxylase (ACC) complex. Biotin carboxylase (BC) catalyzes the carboxylation of biotin on its carrier protein (BCCP) and then the CO(2) group is transferred by the transcarboxylase to acetyl-CoA to form malonyl-CoA. The sequence is that of Acetyl-coenzyme A carboxylase carboxyl transferase subunit beta from Bacillus cereus (strain G9842).